The chain runs to 138 residues: Succinate dehydrogenase assembly factor 4, mitochondrial (138 aa).

The transit peptide at Met1 to Lys32 directs the protein to the mitochondrion. The segment covering Gln71–Phe98 has biased composition (polar residues). A disordered region spans residues Gln71–Phe138.

This sequence belongs to the SDHAF4 family. In terms of assembly, interacts with SDH1 in its FAD-bound form.

The protein localises to the mitochondrion matrix. Functionally, plays an essential role in the assembly of succinate dehydrogenase (SDH), an enzyme complex (also referred to as respiratory complex II) that is a component of both the tricarboxylic acid (TCA) cycle and the mitochondrial electron transport chain, and which couples the oxidation of succinate to fumarate with the reduction of ubiquinone (coenzyme Q) to ubiquinol. Binds to the flavoprotein subunit SDH1 in its FAD-bound form, blocking the generation of excess reactive oxygen species (ROS) and facilitating its assembly with the iron-sulfur protein subunit SDH2 into the SDH catalytic dimer. The chain is Succinate dehydrogenase assembly factor 4, mitochondrial from Saccharomyces cerevisiae (strain ATCC 204508 / S288c) (Baker's yeast).